Consider the following 758-residue polypeptide: Ferrichrome receptor FcuA (758 aa).

A signal peptide spans 1–36; that stretch reads MNQTISSRAPQKRLAPRLLCVMIGAALGTLSASSWA. The TonB box motif lies at 66 to 73; it reads DTITVVGA. Positions 106-216 constitute a TBDR plug domain; the sequence is DARNVPFNVI…VGGMINLEPK (111 aa). In terms of domain architecture, TBDR beta-barrel spans 221-758; it reads TPLTRVTVDY…ALKLSVSMDF (538 aa). The TonB C-terminal box motif lies at 741–758; it reads YIYQGDPRALKLSVSMDF.

This sequence belongs to the TonB-dependent receptor family.

The protein resides in the cell outer membrane. Functionally, receptor for the hydroxamate siderophore, ferrichrome. Binds also to most other ferrichrome derivatives except enantio ferrichrome and ferric rhodotorulate. In Yersinia enterocolitica, this protein is Ferrichrome receptor FcuA (fcuA).